The primary structure comprises 429 residues: L-threonine dehydratase biosynthetic IlvA (429 aa).

An N6-(pyridoxal phosphate)lysine modification is found at Lys66. Residues Asn93, 196-200 (GGGGC), and Ser322 each bind pyridoxal 5'-phosphate. One can recognise an ACT-like domain in the interval 346-420 (HYFLVDFPQE…TDIHVEALEP (75 aa)).

This sequence belongs to the serine/threonine dehydratase family. As to quaternary structure, homotetramer. Requires pyridoxal 5'-phosphate as cofactor.

The enzyme catalyses L-threonine = 2-oxobutanoate + NH4(+). Its pathway is amino-acid biosynthesis; L-isoleucine biosynthesis; 2-oxobutanoate from L-threonine: step 1/1. Its function is as follows. Catalyzes the anaerobic formation of alpha-ketobutyrate and ammonia from threonine in a two-step reaction. The first step involved a dehydration of threonine and a production of enamine intermediates (aminocrotonate), which tautomerizes to its imine form (iminobutyrate). Both intermediates are unstable and short-lived. The second step is the nonenzymatic hydrolysis of the enamine/imine intermediates to form 2-ketobutyrate and free ammonia. In the low water environment of the cell, the second step is accelerated by RidA. The chain is L-threonine dehydratase biosynthetic IlvA (ilvA) from Mycobacterium bovis (strain ATCC BAA-935 / AF2122/97).